The chain runs to 262 residues: Sperm microtubule inner protein 6 (262 aa).

This sequence belongs to the SPMIP6 family. In terms of assembly, microtubule inner protein component of sperm flagellar doublet microtubules. Interacts with alpha-tubulin. Expressed in testis. Strongly expressed in ciliated epithelial cells with lower levels in goblet cells (at protein level).

The protein localises to the cytoplasm. Its subcellular location is the cytoskeleton. It is found in the nucleus. The protein resides in the mitochondrion. It localises to the flagellum axoneme. In terms of biological role, may participate in intramanchette transport and midpiece formation of the sperm tail. May play a potential role in somatic cell proliferation. The sequence is that of Sperm microtubule inner protein 6 from Homo sapiens (Human).